A 105-amino-acid chain; its full sequence is Small ribosomal subunit protein uS10 (105 aa).

It belongs to the universal ribosomal protein uS10 family. Part of the 30S ribosomal subunit.

Involved in the binding of tRNA to the ribosomes. This is Small ribosomal subunit protein uS10 from Chlamydia abortus (strain DSM 27085 / S26/3) (Chlamydophila abortus).